The following is a 190-amino-acid chain: Ion-translocating oxidoreductase complex subunit B (190 aa).

A hydrophobic region spans residues 1–26 (MTALWIAIAALSALGLLFGLVLGYAA). Residues 32–90 (EEDPVAEQVDEILPQSQCGQCGYPGCRPYAEAVANGEMINKCAPGGEQVMLKLAELLNV) enclose the 4Fe-4S domain. Residues Cys49, Cys52, Cys57, Cys73, Cys115, Cys118, Cys121, Cys125, Cys145, Cys148, Cys151, and Cys155 each coordinate [4Fe-4S] cluster. 2 consecutive 4Fe-4S ferredoxin-type domains span residues 106–135 (QVAYIDEANCIGCTKCIQACPVDAIVGATR) and 136–165 (AMHTVITDLCTGCDLCVAPCPTDCIEMRPV).

It belongs to the 4Fe4S bacterial-type ferredoxin family. RnfB subfamily. The complex is composed of six subunits: RnfA, RnfB, RnfC, RnfD, RnfE and RnfG. It depends on [4Fe-4S] cluster as a cofactor.

It localises to the cell inner membrane. Part of a membrane-bound complex that couples electron transfer with translocation of ions across the membrane. The chain is Ion-translocating oxidoreductase complex subunit B from Serratia proteamaculans (strain 568).